A 31-amino-acid chain; its full sequence is Cytochrome b6-f complex subunit 6 (31 aa).

Residues 4-24 (LTSYFGFLLAALTITSVLFIG) form a helical membrane-spanning segment.

Belongs to the PetL family. As to quaternary structure, the 4 large subunits of the cytochrome b6-f complex are cytochrome b6, subunit IV (17 kDa polypeptide, PetD), cytochrome f and the Rieske protein, while the 4 small subunits are PetG, PetL, PetM and PetN. The complex functions as a dimer.

It localises to the plastid. The protein localises to the chloroplast thylakoid membrane. Its function is as follows. Component of the cytochrome b6-f complex, which mediates electron transfer between photosystem II (PSII) and photosystem I (PSI), cyclic electron flow around PSI, and state transitions. PetL is important for photoautotrophic growth as well as for electron transfer efficiency and stability of the cytochrome b6-f complex. The sequence is that of Cytochrome b6-f complex subunit 6 from Silene conica (Striped corn catchfly).